The sequence spans 691 residues: Glycine--tRNA ligase beta subunit (691 aa).

Belongs to the class-II aminoacyl-tRNA synthetase family. Tetramer of two alpha and two beta subunits.

The protein localises to the cytoplasm. It carries out the reaction tRNA(Gly) + glycine + ATP = glycyl-tRNA(Gly) + AMP + diphosphate. The polypeptide is Glycine--tRNA ligase beta subunit (Levilactobacillus brevis (strain ATCC 367 / BCRC 12310 / CIP 105137 / JCM 1170 / LMG 11437 / NCIMB 947 / NCTC 947) (Lactobacillus brevis)).